The primary structure comprises 433 residues: Enolase (433 aa).

Residue glutamine 166 coordinates (2R)-2-phosphoglycerate. Catalysis depends on glutamate 208, which acts as the Proton donor. Aspartate 245, glutamate 289, and aspartate 316 together coordinate Mg(2+). Residues lysine 341, arginine 370, serine 371, and lysine 392 each contribute to the (2R)-2-phosphoglycerate site. Lysine 341 serves as the catalytic Proton acceptor.

This sequence belongs to the enolase family. It depends on Mg(2+) as a cofactor.

Its subcellular location is the cytoplasm. It localises to the secreted. The protein resides in the cell surface. It carries out the reaction (2R)-2-phosphoglycerate = phosphoenolpyruvate + H2O. The protein operates within carbohydrate degradation; glycolysis; pyruvate from D-glyceraldehyde 3-phosphate: step 4/5. Its function is as follows. Catalyzes the reversible conversion of 2-phosphoglycerate (2-PG) into phosphoenolpyruvate (PEP). It is essential for the degradation of carbohydrates via glycolysis. This is Enolase from Acetivibrio thermocellus (strain ATCC 27405 / DSM 1237 / JCM 9322 / NBRC 103400 / NCIMB 10682 / NRRL B-4536 / VPI 7372) (Clostridium thermocellum).